The sequence spans 295 residues: Protease HtpX (295 aa).

2 helical membrane-spanning segments follow: residues 4 to 24 (ILLF…TLSL) and 41 to 61 (SSLL…SLFI). A Zn(2+)-binding site is contributed by His147. The active site involves Glu148. His151 serves as a coordination point for Zn(2+). Transmembrane regions (helical) follow at residues 158-178 (VTLA…ARII) and 199-219 (VATI…VMWF). Glu224 is a Zn(2+) binding site.

It belongs to the peptidase M48B family. The cofactor is Zn(2+).

The protein resides in the cell inner membrane. This is Protease HtpX from Pseudomonas putida (strain ATCC 700007 / DSM 6899 / JCM 31910 / BCRC 17059 / LMG 24140 / F1).